We begin with the raw amino-acid sequence, 213 residues long: Flagellin A1 (213 aa).

Residues methionine 1 to glycine 10 constitute a propeptide that is removed on maturation. N-linked (GlcNAc...) asparagine glycosylation is found at asparagine 70, asparagine 115, and asparagine 172.

It belongs to the archaeal flagellin family. Glycosylated by a pentasaccharide similar to the S-layer glycoprotein, probably comprising a hexose, 2 hexuronic acids, a methyl ester of a hexuronic acid and mannose. Glycosylation is required for biosynthesis of stable flagella.

The protein localises to the archaeal flagellum. In terms of biological role, major flagellin required for motility. Not involved in PibD-dependent surface adhesion. Much more abundant in cells compared to FlgA2. The protein is Flagellin A1 (flgA1) of Haloferax volcanii (strain ATCC 29605 / DSM 3757 / JCM 8879 / NBRC 14742 / NCIMB 2012 / VKM B-1768 / DS2) (Halobacterium volcanii).